The following is a 554-amino-acid chain: Glucose-6-phosphate isomerase (554 aa).

Glu359 (proton donor) is an active-site residue. Active-site residues include His390 and Lys518.

The protein belongs to the GPI family.

The protein resides in the cytoplasm. The enzyme catalyses alpha-D-glucose 6-phosphate = beta-D-fructose 6-phosphate. The protein operates within carbohydrate biosynthesis; gluconeogenesis. It participates in carbohydrate degradation; glycolysis; D-glyceraldehyde 3-phosphate and glycerone phosphate from D-glucose: step 2/4. Functionally, catalyzes the reversible isomerization of glucose-6-phosphate to fructose-6-phosphate. This Stutzerimonas stutzeri (strain A1501) (Pseudomonas stutzeri) protein is Glucose-6-phosphate isomerase.